The sequence spans 242 residues: Methylthioribulose-1-phosphate dehydratase (242 aa).

Position 97 (Cys-97) interacts with substrate. Zn(2+)-binding residues include His-115 and His-117. Residue Glu-139 is the Proton donor/acceptor of the active site. A Zn(2+)-binding site is contributed by His-195.

The protein belongs to the aldolase class II family. MtnB subfamily. Homotetramer. Interacts with APAF1. May interact with CASP1. It depends on Zn(2+) as a cofactor.

It localises to the cytoplasm. The catalysed reaction is 5-(methylsulfanyl)-D-ribulose 1-phosphate = 5-methylsulfanyl-2,3-dioxopentyl phosphate + H2O. It functions in the pathway amino-acid biosynthesis; L-methionine biosynthesis via salvage pathway; L-methionine from S-methyl-5-thio-alpha-D-ribose 1-phosphate: step 2/6. In terms of biological role, catalyzes the dehydration of methylthioribulose-1-phosphate (MTRu-1-P) into 2,3-diketo-5-methylthiopentyl-1-phosphate (DK-MTP-1-P). Functions in the methionine salvage pathway, which plays a key role in cancer, apoptosis, microbial proliferation and inflammation. May inhibit the CASP1-related inflammatory response (pyroptosis), the CASP9-dependent apoptotic pathway and the cytochrome c-dependent and APAF1-mediated cell death. The sequence is that of Methylthioribulose-1-phosphate dehydratase from Bos taurus (Bovine).